We begin with the raw amino-acid sequence, 241 residues long: Leucyl/phenylalanyl-tRNA--protein transferase (241 aa).

Belongs to the L/F-transferase family.

It localises to the cytoplasm. The enzyme catalyses N-terminal L-lysyl-[protein] + L-leucyl-tRNA(Leu) = N-terminal L-leucyl-L-lysyl-[protein] + tRNA(Leu) + H(+). The catalysed reaction is N-terminal L-arginyl-[protein] + L-leucyl-tRNA(Leu) = N-terminal L-leucyl-L-arginyl-[protein] + tRNA(Leu) + H(+). It carries out the reaction L-phenylalanyl-tRNA(Phe) + an N-terminal L-alpha-aminoacyl-[protein] = an N-terminal L-phenylalanyl-L-alpha-aminoacyl-[protein] + tRNA(Phe). Functions in the N-end rule pathway of protein degradation where it conjugates Leu, Phe and, less efficiently, Met from aminoacyl-tRNAs to the N-termini of proteins containing an N-terminal arginine or lysine. This Neisseria meningitidis serogroup C (strain 053442) protein is Leucyl/phenylalanyl-tRNA--protein transferase.